Here is a 545-residue protein sequence, read N- to C-terminus: E3 ubiquitin-protein ligase ipaH9.8 (545 aa).

The segment at 1–242 (MLPINNNFSL…YHGPRIYFSM (242 aa)) is interaction with target proteins. LRR repeat units follow at residues 57 to 77 (NSDE…NLPA), 78 to 99 (QITL…PVTL), 100 to 117 (KKLY…VLPP), 118 to 139 (ALES…PDSL), 140 to 157 (LTMN…SLPQ), 158 to 179 (ALKN…SEGN), 182 to 203 (VVRE…ILNL), and 205 to 228 (NECS…QRLT). The tract at residues 243-250 (SDGQQNTL) is linker. Residues 251-545 (HRPLADAVTA…SENGSQLHHS (295 aa)) form an E3 ubiquitin-protein ligase catalytic domain region. One can recognise an NEL domain in the interval 253 to 545 (PLADAVTAWF…SENGSQLHHS (293 aa)). The Glycyl thioester intermediate role is filled by C337.

Belongs to the LRR-containing bacterial E3 ligase family. As to quaternary structure, also interacts with human and mouse U2AF1 (U2AF35). Post-translationally, ubiquitinated in the presence of host E1 ubiquitin-activating enzyme, E2 ubiquitin-conjugating enzyme and ubiquitin.

It localises to the secreted. The protein resides in the host cytoplasm. The protein localises to the host nucleus. The enzyme catalyses S-ubiquitinyl-[E2 ubiquitin-conjugating enzyme]-L-cysteine + [acceptor protein]-L-lysine = [E2 ubiquitin-conjugating enzyme]-L-cysteine + N(6)-ubiquitinyl-[acceptor protein]-L-lysine.. Its activity is regulated as follows. Exists in an autoinhibited state in the absence of substrate protein, due to interactions of the leucine-rich repeats with NEL domain. Is activated upon binding to a substrate protein. Functionally, effector E3 ubiquitin ligase that interferes with host's ubiquitination pathway and modulates the acute inflammatory responses, thus facilitating bacterial colonization within the host cell. Interacts with IKBKG (NEMO) and TNIP1 (ABIN-1), a ubiquitin-binding adapter protein, which results in TNIP1-dependent 'Lys-27'-linked polyubiquitination of IKBKG. Consequently, polyubiquitinated IKBKG undergoes proteasome-dependent degradation, which perturbs NF-kappa-B activation during bacterial infection. Mediates polyubiquitination of host U2AF1, leading to its proteasomal degradation. Catalyzes 'Lys-48'-linked polyubiquitination and subsequent degradation of a subset of host guanylate-binding proteins (GBP1, GBP2, GBP4 and GBP6), thereby suppressing host cell defense. In contrast, host GBP3 and GBP7 are not ubiquitinated by IpaH9.8. Uses UBE2D2 (UBCH5B) as an E2 ubiquitin-conjugating enzyme. The chain is E3 ubiquitin-protein ligase ipaH9.8 (ipaH9.8) from Shigella sonnei (strain Ss046).